A 341-amino-acid chain; its full sequence is Long-chain acyl-[acyl-carrier-protein] reductase (341 aa).

It belongs to the short-chain dehydrogenases/reductases (SDR) family. The cofactor is a divalent metal cation.

The catalysed reaction is a long-chain fatty aldehyde + holo-[ACP] + NADP(+) = a long-chain fatty acyl-[ACP] + NADPH + H(+). It carries out the reaction a long-chain fatty aldehyde + holo-[ACP] + NAD(+) = a long-chain fatty acyl-[ACP] + NADH + H(+). Its function is as follows. Catalyzes the NADP-dependent reduction of long-chain acyl-ACP to the corresponding fatty aldehyde. Involved in the biosynthesis of alkanes, mainly heptadecane and pentadecane, by producing the fatty aldehydes used by aldehyde decarbonylase. The sequence is that of Long-chain acyl-[acyl-carrier-protein] reductase from Synechococcus elongatus (strain ATCC 33912 / PCC 7942 / FACHB-805) (Anacystis nidulans R2).